A 190-amino-acid polypeptide reads, in one-letter code: Putative serine carboxypeptidase-like 54 (190 aa).

The first 25 residues, 1 to 25 (MATKTFSLPFLLIVCIFSQLSSTFG), serve as a signal peptide directing secretion. Residues Asn58, Asn59, and Asn105 are each glycosylated (N-linked (GlcNAc...) asparagine).

This sequence belongs to the peptidase S10 family.

The protein resides in the secreted. The sequence is that of Putative serine carboxypeptidase-like 54 (SCPL54) from Arabidopsis thaliana (Mouse-ear cress).